A 357-amino-acid polypeptide reads, in one-letter code: Peptide chain release factor 1 (357 aa).

Position 236 is an N5-methylglutamine (Gln236). The span at 284-293 (RRKKDQERAN) shows a compositional bias: basic and acidic residues. The segment at 284–313 (RRKKDQERANNRRKQIGSGDRSERIRTYNF) is disordered.

It belongs to the prokaryotic/mitochondrial release factor family. Post-translationally, methylated by PrmC. Methylation increases the termination efficiency of RF1.

The protein localises to the cytoplasm. Its function is as follows. Peptide chain release factor 1 directs the termination of translation in response to the peptide chain termination codons UAG and UAA. This Rickettsia bellii (strain RML369-C) protein is Peptide chain release factor 1.